An 85-amino-acid chain; its full sequence is Large ribosomal subunit protein bL27 (85 aa).

The interval 1–24 (MAHKKAGGSSRNGRDSNSKRLGVK) is disordered.

Belongs to the bacterial ribosomal protein bL27 family.

The chain is Large ribosomal subunit protein bL27 from Nitrosospira multiformis (strain ATCC 25196 / NCIMB 11849 / C 71).